Consider the following 455-residue polypeptide: C4-dicarboxylate transport protein (455 aa).

A run of 8 helical transmembrane segments spans residues 20–40 (HLYFQVLCAIVAGALIGHFYP), 59–79 (MIIAPVIFLTIVTGLAGMGTL), 91–111 (GYFLTFSTLALVVGLITANVI), 160–180 (GNILQVLFVAILFGIGLILIG), 209–229 (PIGAFGAFAFTIGKYGIASVV), 231–251 (LATLVGTFYLTSALFVIVVLG), 344–364 (LLLVAMLSSKGAAGVTGAGFI), and 367–387 (AATLSVVPTVPVAGMALILGV).

It belongs to the dicarboxylate/amino acid:cation symporter (DAACS) (TC 2.A.23) family.

Its subcellular location is the cell inner membrane. Its function is as follows. Responsible for the transport of dicarboxylates such as succinate, fumarate, and malate from the periplasm across the membrane. This chain is C4-dicarboxylate transport protein, found in Paracoccus denitrificans (strain Pd 1222).